The chain runs to 395 residues: Protein TAMALIN (395 aa).

Residues 1–52 (MTLRRLRKLQQKEEAAATPDPAARTPDSEVAPAAPVPTPGPPAAAATPGPPA) are disordered. Positions 16-33 (AATPDPAARTPDSEVAPA) are enriched in low complexity. At T77 the chain carries Phosphothreonine. S94 carries the phosphoserine modification. Positions 101-190 (VLTLEKEDNQ…VLRLETLYGT (90 aa)) constitute a PDZ domain. Positions 181–258 (VLRLETLYGT…GAGLLPGSLP (78 aa)) are interaction with PSCD3. Y237 carries the phosphotyrosine modification. R270 carries the post-translational modification Omega-N-methylarginine. The tract at residues 293–349 (SEPPALPPPPPPARAFGPGPAETPAVGPGPGPRAALSRSASVRCAGPGGGGGGGAPG) is disordered. The span at 296-305 (PALPPPPPPA) shows a compositional bias: pro residues. The span at 338–348 (GPGGGGGGGAP) shows a compositional bias: gly residues. Phosphoserine is present on S387.

In terms of assembly, heteromer. Composed of TAMALIN, CYTH2 and at least one GRM1. Also interacts with CYTH3, GRM2, GRM3 and GRM5.

The protein resides in the cytoplasm. It localises to the perinuclear region. The protein localises to the cell membrane. It is found in the postsynaptic cell membrane. Its function is as follows. Plays a role in intracellular trafficking and contributes to the macromolecular organization of group 1 metabotropic glutamate receptors (mGluRs) at synapses. This chain is Protein TAMALIN, found in Homo sapiens (Human).